The primary structure comprises 49 residues: uncharacterized protein (49 aa).

A signal peptide spans Met-1–Ser-22.

It is found in the secreted. This is an uncharacterized protein from Dictyostelium discoideum (Social amoeba).